The sequence spans 397 residues: MRGLAMRLPPRLALSVLAGRGPSCILGSGAATRKDWQERNRRSFSDLYTQPLPDCDFEESSSWTHKSRSEPTRHIACKKSARNLVRDLLEHQNPSHQLILECNPGPGILTGALLKAGARVVAFESEKMFIPHLESLRKNADGELQVVHCDFFKIDPRYQELVRPDVNSHTIFQNLGIKAVPWSAGVPIKVFGILPNKHERRLLWKILFDLYSCESIYRYGRVELNMFISEKEFRKLIATPKRPDLYQVLGVLWQVACEIKFLHMEPWSSFSVHAENGHLEKSKHSESLNLLKQNLYLVRMTPRRTLFTENLSPLNYDMFFHLVKHCFGKRNAPIIHHLRSLSTVDPINILRQIRKRPGDTAAKMYPHDFKRLFETIERSEDSVFKWIYDYCSDDSEL.

The N-terminal 44 residues, 1–44, are a transit peptide targeting the mitochondrion; sequence MRGLAMRLPPRLALSVLAGRGPSCILGSGAATRKDWQERNRRSF. Residues Ile75, Glu124, and Asp150 each contribute to the S-adenosyl-L-methionine site. Residues 329-330 form a DNA-binding region; that stretch reads KR.

This sequence belongs to the class I-like SAM-binding methyltransferase superfamily. rRNA adenine N(6)-methyltransferase family. KsgA subfamily. Homodimer. Component of the mitochondrial transcription initiation complex, composed at least of TFB2M, TFAM and POLRMT. In this complex TFAM recruits POLRMT to the promoter whereas TFB2M induces structural changes in POLRMT to enable promoter opening and trapping of the DNA non-template strand. Interacts with mitochondrial RNA polymerase POLRMT. Interacts with TFAM.

The protein localises to the mitochondrion. The catalysed reaction is adenosine in rRNA + S-adenosyl-L-methionine = N(6)-methyladenosine in rRNA + S-adenosyl-L-homocysteine + H(+). Functionally, S-adenosyl-L-methionine-dependent rRNA methyltransferase which may methylate two specific adjacent adenosines in the loop of a conserved hairpin near the 3'-end of 12S mitochondrial rRNA. Component of the mitochondrial transcription initiation complex, composed at least of TFB2M, TFAM and POLRMT that is required for basal transcription of mitochondrial DNA. In this complex TFAM recruits POLRMT to a specific promoter whereas TFB2M induces structural changes in POLRMT to enable promoter opening and trapping of the DNA non-template strand. Stimulates transcription independently of the methyltransferase activity. The chain is Dimethyladenosine transferase 2, mitochondrial from Rattus norvegicus (Rat).